Consider the following 75-residue polypeptide: Small ribosomal subunit protein bS18 (75 aa).

This sequence belongs to the bacterial ribosomal protein bS18 family. As to quaternary structure, part of the 30S ribosomal subunit. Forms a tight heterodimer with protein bS6.

Functionally, binds as a heterodimer with protein bS6 to the central domain of the 16S rRNA, where it helps stabilize the platform of the 30S subunit. This is Small ribosomal subunit protein bS18 from Sodalis glossinidius (strain morsitans).